The sequence spans 152 residues: Small ribosomal subunit protein uS11 (152 aa).

This sequence belongs to the universal ribosomal protein uS11 family. In terms of assembly, component of the small ribosomal subunit. Part of the small subunit (SSU) processome, composed of more than 70 proteins and the RNA chaperone small nucleolar RNA (snoRNA) U3.

The protein resides in the cytoplasm. Its subcellular location is the nucleus. It is found in the nucleolus. Functionally, component of the small ribosomal subunit. The ribosome is a large ribonucleoprotein complex responsible for the synthesis of proteins in the cell. Part of the small subunit (SSU) processome, first precursor of the small eukaryotic ribosomal subunit. During the assembly of the SSU processome in the nucleolus, many ribosome biogenesis factors, an RNA chaperone and ribosomal proteins associate with the nascent pre-rRNA and work in concert to generate RNA folding, modifications, rearrangements and cleavage as well as targeted degradation of pre-ribosomal RNA by the RNA exosome. The chain is Small ribosomal subunit protein uS11 (rps-14) from Caenorhabditis elegans.